A 59-amino-acid chain; its full sequence is Large ribosomal subunit protein bL32 (59 aa).

It belongs to the bacterial ribosomal protein bL32 family.

The protein is Large ribosomal subunit protein bL32 of Polynucleobacter necessarius subsp. necessarius (strain STIR1).